Consider the following 583-residue polypeptide: Fumarate reductase flavoprotein subunit (583 aa).

FAD-binding positions include 11-15, 35-37, 43-51, 155-157, and D211; these read GGGGA, VSK, SHTVSAEGG, and WFA. H44 is modified (tele-8alpha-FAD histidine). Catalysis depends on residues H232 and R248. FAD is bound by residues 353–354, E377, and 388–394; these read HY and RLGSNSL.

Belongs to the FAD-dependent oxidoreductase 2 family. FRD/SDH subfamily. Part of an enzyme complex containing four subunits: a flavoprotein (FrdA), an iron-sulfur protein (FrdB), and two hydrophobic anchor proteins (FrdC and FrdD). The cofactor is FAD.

It localises to the cell membrane. It catalyses the reaction a quinone + succinate = fumarate + a quinol. The catalysed reaction is a menaquinone + succinate = a menaquinol + fumarate. The protein is Fumarate reductase flavoprotein subunit (frdA) of Mycobacterium tuberculosis (strain CDC 1551 / Oshkosh).